Here is a 163-residue protein sequence, read N- to C-terminus: MTRKQRRLVFIGTCGAVLAVALGLVLWAMSGTIVFFRSPSEIAREAVAPGVRFRLGGLVEAGSVVRGPDSQVTFAVTDNAARLPVRYRGLLPDLFREGQGVVAEGAMEPGGVFRADTVLAKHDETYMPREVADALKKSGRWQEGAGHPAPAPPRTASGEARAP.

At 1–7 the chain is on the cytoplasmic side; that stretch reads MTRKQRR. The helical; Signal-anchor for type II membrane protein transmembrane segment at 8-28 threads the bilayer; it reads LVFIGTCGAVLAVALGLVLWA. The Periplasmic segment spans residues 29–163; sequence MSGTIVFFRS…RTASGEARAP (135 aa). Residues histidine 122 and tyrosine 126 each contribute to the heme site. The interval 134–163 is disordered; the sequence is ALKKSGRWQEGAGHPAPAPPRTASGEARAP.

It belongs to the CcmE/CycJ family.

It localises to the cell inner membrane. Functionally, heme chaperone required for the biogenesis of c-type cytochromes. Transiently binds heme delivered by CcmC and transfers the heme to apo-cytochromes in a process facilitated by CcmF and CcmH. The protein is Cytochrome c-type biogenesis protein CcmE of Methylobacterium sp. (strain 4-46).